The following is a 102-amino-acid chain: Small ribosomal subunit protein uS10 (102 aa).

The protein belongs to the universal ribosomal protein uS10 family. In terms of assembly, part of the 30S ribosomal subunit.

Its function is as follows. Involved in the binding of tRNA to the ribosomes. This is Small ribosomal subunit protein uS10 from Macrococcus caseolyticus (strain JCSC5402) (Macrococcoides caseolyticum).